Reading from the N-terminus, the 78-residue chain is NEDD8-like protein RUB3 (78 aa).

A Glycyl lysine isopeptide (Gly-Lys) (interchain with K-? in acceptor proteins) cross-link involves residue Gly-76. The propeptide occupies 77–78 (CC).

In terms of tissue distribution, detected in stems and flower buds, but not in leaves, mature flowers and seedlings.

Its function is as follows. May function as a stable post-translational protein modifier. This is NEDD8-like protein RUB3 (RUB3) from Arabidopsis thaliana (Mouse-ear cress).